A 1256-amino-acid polypeptide reads, in one-letter code: Bifunctional autolysin (1256 aa).

Positions 1 to 29 (MAKKFNYKLPSMVALTLVGSAVTAHQVQA) are cleaved as a signal peptide. Polar residues predominate over residues 103–138 (GDTRANQSATTNNTQPVAKSTSTTAPKTNTNVTNAG). Disordered regions lie at residues 103–151 (GDTR…NSEN), 172–219 (KTAA…KYKP), and 419–440 (TQST…PSTG). 2 stretches are compositionally biased toward low complexity: residues 172-196 (KTAA…KVTT) and 421-439 (STTT…KPST). The tract at residues 199 to 775 (ASAQPRSVAA…AVAQPKTAVK (577 aa)) is N-acetylmuramoyl-L-alanine amidase. GW domains are found at residues 443–517 (TVAA…YNTA), 519–593 (SPVN…DTAK), 612–686 (TVSS…YNNA), 688–762 (SPVN…VPAA), 784–859 (TTQT…VQNL), 861–936 (KEVK…APTA), and 943–1017 (AAKD…KELI). The endo-beta-N-acetylglucosaminidase stretch occupies residues 776 to 1256 (AYTVTKPQTT…GKYFDIPQYK (481 aa)).

In the N-terminal section; belongs to the N-acetylmuramoyl-L-alanine amidase 2 family. It in the C-terminal section; belongs to the glycosyl hydrolase 73 family. In terms of assembly, oligomer; forms a ring structure at the cell surface which is important for efficient partitioning of daughter cells after cell division. Undergoes proteolytic processing to generate the two extracellular lytic enzymes, probably at the septal region on the cell surface.

It localises to the secreted. The catalysed reaction is Hydrolyzes the link between N-acetylmuramoyl residues and L-amino acid residues in certain cell-wall glycopeptides.. It catalyses the reaction an N(4)-(oligosaccharide-(1-&gt;3)-[oligosaccharide-(1-&gt;6)]-beta-D-Man-(1-&gt;4)-beta-D-GlcNAc-(1-&gt;4)-alpha-D-GlcNAc)-L-asparaginyl-[protein] + H2O = an oligosaccharide-(1-&gt;3)-[oligosaccharide-(1-&gt;6)]-beta-D-Man-(1-&gt;4)-D-GlcNAc + N(4)-(N-acetyl-beta-D-glucosaminyl)-L-asparaginyl-[protein]. Endohydrolysis of the di-N-acetylchitobiosyl unit in high-mannose glycopeptides and glycoproteins containing the -[(Man)5(GlcNAc)2]-Asn structure. One N-acetyl-D-glucosamine residue remains attached to the protein; the rest of the oligosaccharide is released intact. Cleaves the peptidoglycan connecting the daughter cells at the end of the cell division cycle, resulting in the separation of the two newly divided cells. Acts as an autolysin in penicillin-induced lysis. This Staphylococcus aureus (strain COL) protein is Bifunctional autolysin (atl).